A 560-amino-acid chain; its full sequence is DNA ligase B (560 aa).

K124 (N6-AMP-lysine intermediate) is an active-site residue.

This sequence belongs to the NAD-dependent DNA ligase family. LigB subfamily.

It catalyses the reaction NAD(+) + (deoxyribonucleotide)n-3'-hydroxyl + 5'-phospho-(deoxyribonucleotide)m = (deoxyribonucleotide)n+m + AMP + beta-nicotinamide D-nucleotide.. Catalyzes the formation of phosphodiester linkages between 5'-phosphoryl and 3'-hydroxyl groups in double-stranded DNA using NAD as a coenzyme and as the energy source for the reaction. The protein is DNA ligase B of Shigella flexneri.